The chain runs to 425 residues: Histidine--tRNA ligase (425 aa).

The protein belongs to the class-II aminoacyl-tRNA synthetase family. In terms of assembly, homodimer.

It is found in the cytoplasm. The catalysed reaction is tRNA(His) + L-histidine + ATP = L-histidyl-tRNA(His) + AMP + diphosphate + H(+). This chain is Histidine--tRNA ligase, found in Pelotomaculum thermopropionicum (strain DSM 13744 / JCM 10971 / SI).